Consider the following 1327-residue polypeptide: Vascular endothelial growth factor receptor 1 (1327 aa).

The N-terminal stretch at 1 to 24 (MPRQLLSGTVLLGAAFLLAGSTSG) is a signal peptide. Topologically, residues 25-749 (SKLKVPVLSV…GTVERSNLEL (725 aa)) are extracellular. 7 Ig-like C2-type domains span residues 30-121 (PVLS…SIVY), 120-222 (VYVF…HRET), 227-323 (DIKL…TTVI), 331-417 (NLKR…LTVT), 424-545 (PQIY…RNVS), 552-644 (PSGF…KDVS), and 651-737 (PALL…AYVT). Asn48, Asn73, Asn82, Asn98, and Asn125 each carry an N-linked (GlcNAc...) asparagine glycan. A disulfide bridge links Cys51 with Cys105. Cys154 and Cys203 are joined by a disulfide. N-linked (GlcNAc...) asparagine glycosylation occurs at Asn247. Cys248 and Cys307 are disulfide-bonded. Residues Asn319, Asn383, Asn398, Asn409, Asn413, Asn470, Asn512, Asn543, Asn593, Asn615, and Asn663 are each glycosylated (N-linked (GlcNAc...) asparagine). Cys450 and Cys531 are joined by a disulfide. A disulfide bond links Cys573 and Cys626. Cys672 and Cys721 are oxidised to a cystine. The chain crosses the membrane as a helical span at residues 750–770 (ITLTCTCVAATLFWLLLTLFI). The Cytoplasmic portion of the chain corresponds to 771 to 1327 (RKLKRPYFSE…SVVHYSQPSI (557 aa)). One can recognise a Protein kinase domain in the interval 819 to 1151 (LKLGKSLGHG…ELVKRLGDLL (333 aa)). ATP is bound by residues 825-833 (LGHGAFGKV) and Lys853. A disordered region spans residues 950-971 (ASVTSSESFASSGFQEDKSLSD). The segment covering 951–961 (SVTSSESFASS) has biased composition (low complexity). Asp1015 (proton acceptor) is an active-site residue. Phosphotyrosine; by autocatalysis is present on residues Tyr1046, Tyr1162, Tyr1202, Tyr1231, Tyr1316, and Tyr1322.

It belongs to the protein kinase superfamily. Tyr protein kinase family. CSF-1/PDGF receptor subfamily. As to quaternary structure, interacts with VEGFA, VEGFB and PGF. Monomer in the absence of bound VEGFA, VEGFB or PGF. Homodimer in the presence of bound VEGFA, VEGFB and PGF. Autophosphorylated on tyrosine residues upon ligand binding.

It localises to the cell membrane. It is found in the endosome. Its subcellular location is the secreted. It carries out the reaction L-tyrosyl-[protein] + ATP = O-phospho-L-tyrosyl-[protein] + ADP + H(+). Present in an inactive conformation in the absence of bound ligand. Binding of VEGFA, VEGFB or PGF leads to dimerization and activation by autophosphorylation on tyrosine residues. Functionally, tyrosine-protein kinase that acts as a cell-surface receptor for VEGFA, VEGFB and PGF, and plays an essential role in the regulation of angiogenesis, cell survival, cell migration, macrophage function, and chemotaxis. Acts as a positive regulator of postnatal retinal hyaloid vessel regression. Has very high affinity for VEGFA and relatively low protein kinase activity; may function as a negative regulator of VEGFA signaling by limiting the amount of free VEGFA and preventing its binding to KDR. Ligand binding leads to the activation of several signaling cascades. Activation of PLCG1 leads to the production of the cellular signaling molecules diacylglycerol and inositol 1,4,5-trisphosphate and the activation of protein kinase C. Mediates phosphorylation of PIK3R1, the regulatory subunit of phosphatidylinositol 3-kinase, leading to activation of phosphatidylinositol kinase and the downstream signaling pathway. Mediates activation of MAPK1/ERK2, MAPK3/ERK1 and the MAP kinase signaling pathway, as well as of the AKT1 signaling pathway. Phosphorylates PLCG1. Promotes phosphorylation of AKT1 and CBL. The protein is Vascular endothelial growth factor receptor 1 (FLT1) of Gallus gallus (Chicken).